The following is a 498-amino-acid chain: Acetyl-coenzyme A carboxylase carboxyl transferase subunit beta, chloroplastic (498 aa).

Residues 228 to 498 (LWVQCEICYG…LNHNLSRTLT (271 aa)) form the CoA carboxyltransferase N-terminal domain. Residues Cys232, Cys235, Cys251, and Cys254 each contribute to the Zn(2+) site. The segment at 232–254 (CEICYGLNYKKFFKSKMNICEQC) adopts a C4-type zinc-finger fold.

The protein belongs to the AccD/PCCB family. In terms of assembly, acetyl-CoA carboxylase is a heterohexamer composed of biotin carboxyl carrier protein, biotin carboxylase and 2 subunits each of ACCase subunit alpha and ACCase plastid-coded subunit beta (accD). Requires Zn(2+) as cofactor.

Its subcellular location is the plastid. The protein resides in the chloroplast stroma. The catalysed reaction is N(6)-carboxybiotinyl-L-lysyl-[protein] + acetyl-CoA = N(6)-biotinyl-L-lysyl-[protein] + malonyl-CoA. Its pathway is lipid metabolism; malonyl-CoA biosynthesis; malonyl-CoA from acetyl-CoA: step 1/1. In terms of biological role, component of the acetyl coenzyme A carboxylase (ACC) complex. Biotin carboxylase (BC) catalyzes the carboxylation of biotin on its carrier protein (BCCP) and then the CO(2) group is transferred by the transcarboxylase to acetyl-CoA to form malonyl-CoA. The chain is Acetyl-coenzyme A carboxylase carboxyl transferase subunit beta, chloroplastic from Populus alba (White poplar).